A 1182-amino-acid chain; its full sequence is WD repeat-containing protein on Y chromosome (1182 aa).

WD repeat units lie at residues 155-199, 323-362, 366-405, 456-495, 508-547, 595-635, 740-779, and 823-862; these read EEIT…LRSA, RIPLGVSVFYVSEIKNILVTGGPDTFVRIWDVYISSEPSA, GHNGGIVAVFVQPEENKVYSVDYHKIIKVWDLQEHTLLQT, THAAPVSVVLYNRLFRNIVTCGLDSYIIVWDPWTGRRKII, TIDIEITAACFDPLEQFLLTGARDGSLKIWNYNNAVVVRN, FHTD…RRYN, KTGDCVLTMATDRKNRFLYTGTAFGYIKVWHIVNYCIPKA, and GHLKAINSIGFINLPKIIFSGSHDYSCRLWTQGGRYLGTL. The tract at residues 1031–1182 is disordered; that stretch reads TKAGANLDQP…PKAKTDRETH (152 aa). 2 stretches are compositionally biased toward low complexity: residues 1079-1092 and 1103-1121; these read GVSSGYGKVSVSQG and TTSLSKPKTSSSPSKPKGS.

The sequence is that of WD repeat-containing protein on Y chromosome from Drosophila virilis (Fruit fly).